The sequence spans 408 residues: Peptidase T (408 aa).

Histidine 78 contributes to the Zn(2+) binding site. Aspartate 80 is a catalytic residue. Residue aspartate 140 coordinates Zn(2+). Glutamate 173 acts as the Proton acceptor in catalysis. Residues glutamate 174, aspartate 196, and histidine 379 each contribute to the Zn(2+) site.

The protein belongs to the peptidase M20B family. Zn(2+) is required as a cofactor.

It localises to the cytoplasm. It catalyses the reaction Release of the N-terminal residue from a tripeptide.. Cleaves the N-terminal amino acid of tripeptides. This Escherichia fergusonii (strain ATCC 35469 / DSM 13698 / CCUG 18766 / IAM 14443 / JCM 21226 / LMG 7866 / NBRC 102419 / NCTC 12128 / CDC 0568-73) protein is Peptidase T.